A 395-amino-acid polypeptide reads, in one-letter code: Chorismate synthase (395 aa).

NADP(+) is bound by residues arginine 40 and arginine 46. FMN is bound by residues 135-137 and 256-257; these read RAS and QA. The segment covering 272–283 has biased composition (basic and acidic residues); the sequence is RRGSQAHDEMRP. A disordered region spans residues 272–296; that stretch reads RRGSQAHDEMRPGPDGILRSTNRAG. Residues glycine 300, 315-319, and arginine 341 each bind FMN; that span reads KPIST.

Belongs to the chorismate synthase family. Homotetramer. It depends on FMNH2 as a cofactor.

It carries out the reaction 5-O-(1-carboxyvinyl)-3-phosphoshikimate = chorismate + phosphate. The protein operates within metabolic intermediate biosynthesis; chorismate biosynthesis; chorismate from D-erythrose 4-phosphate and phosphoenolpyruvate: step 7/7. Its function is as follows. Catalyzes the anti-1,4-elimination of the C-3 phosphate and the C-6 proR hydrogen from 5-enolpyruvylshikimate-3-phosphate (EPSP) to yield chorismate, which is the branch point compound that serves as the starting substrate for the three terminal pathways of aromatic amino acid biosynthesis. This reaction introduces a second double bond into the aromatic ring system. This chain is Chorismate synthase, found in Rhodococcus jostii (strain RHA1).